The following is a 65-amino-acid chain: UPF0434 protein BQ10150 (65 aa).

It belongs to the UPF0434 family.

This chain is UPF0434 protein BQ10150, found in Bartonella quintana (strain Toulouse) (Rochalimaea quintana).